Reading from the N-terminus, the 126-residue chain is Probable V-type proton ATPase subunit G (126 aa).

The tract at residues N23–E45 is disordered. A compositionally biased stretch (basic residues) spans R26–Q35.

It belongs to the V-ATPase G subunit family. In terms of assembly, V-ATPase is a heteromultimeric enzyme made up of two complexes: the ATP-hydrolytic V1 complex and the proton translocation V0 complex. The V1 complex consists of three catalytic AB heterodimers that form a heterohexamer, three peripheral stalks each consisting of EG heterodimers, one central rotor including subunits D and F, and the regulatory subunits C and H. The proton translocation complex V0 consists of the proton transport subunit a, a ring of proteolipid subunits c9c'', rotary subunit d, subunits e and f, and the accessory subunits vah-19/Ac45 and vah-20/PRR.

Its function is as follows. Subunit of the V1 complex of vacuolar(H+)-ATPase (V-ATPase), a multisubunit enzyme composed of a peripheral complex (V1) that hydrolyzes ATP and a membrane integral complex (V0) that translocates protons. V-ATPase is responsible for acidifying and maintaining the pH of intracellular compartments and in some cell types, is targeted to the plasma membrane, where it is responsible for acidifying the extracellular environment. In neurons, required for necrotic cell death by promoting intracellular acidification. This chain is Probable V-type proton ATPase subunit G, found in Caenorhabditis briggsae.